The primary structure comprises 218 residues: MPMILGYWDIRGLAHAIRLLLEYTDSSYEEKKYTMGDAPDYDRSQWLNEKFKLGLDFPNLPYLIDGAHKITQSNAILCYIARKHNLCGETEEEKIRVDILENQTMDNHMQLGMICYNPEFEKLKPKYLEELPEKLKLYSEFLGKRPWFAGNKITFVDFLVYDVLDLHRIFEPKCLDAFPNLKDFISRFEGLEKISAYMKSSRFLPRPVFSKMAVWGNK.

The 87-residue stretch at 2 to 88 (PMILGYWDIR…YIARKHNLCG (87 aa)) folds into the GST N-terminal domain. 7-8 (YW) is a glutathione binding site. Phosphothreonine is present on Thr34. Glutathione-binding positions include 43–46 (RSQW), Lys50, 59–60 (NL), and 72–73 (QS). The 119-residue stretch at 90-208 (TEEEKIRVDI…KSSRFLPRPV (119 aa)) folds into the GST C-terminal domain. Tyr116 contacts substrate. Ser210 carries the phosphoserine modification.

This sequence belongs to the GST superfamily. Mu family. Homodimer. As to expression, liver (at protein level).

Its subcellular location is the cytoplasm. The enzyme catalyses RX + glutathione = an S-substituted glutathione + a halide anion + H(+). The catalysed reaction is prostaglandin A2 + glutathione = prostaglandin A2-S-(R)-glutathione. It carries out the reaction prostaglandin J2 + glutathione = prostaglandin J2-S-(R)-glutathione. It catalyses the reaction prostaglandin J2 + glutathione = prostaglandin J2-S-(S)-glutathione. The enzyme catalyses prostaglandin A2 + glutathione = prostaglandin A2-S-(S)-glutathione. The catalysed reaction is 11(S)-hydroxy-14(S),15(S)-epoxy-(5Z,8Z,12E)-eicosatrienoate + glutathione = (11S,15S)-dihydroxy-14(R)-S-glutathionyl-(5Z,8Z,12E)-eicosatrienoate. In terms of biological role, conjugation of reduced glutathione to a wide number of exogenous and endogenous hydrophobic electrophiles. Involved in the formation of glutathione conjugates of both prostaglandin A2 (PGA2) and prostaglandin J2 (PGJ2). Participates in the formation of novel hepoxilin regioisomers. The polypeptide is Glutathione S-transferase Mu 1 (Homo sapiens (Human)).